Here is a 422-residue protein sequence, read N- to C-terminus: Adenylosuccinate synthetase (422 aa).

Residues 11 to 17 (GDEGKGK) and 39 to 41 (GHT) each bind GTP. The active-site Proton acceptor is the aspartate 12. Mg(2+) is bound by residues aspartate 12 and glycine 39. Residues 12-15 (DEGK), 37-40 (NAGH), threonine 129, arginine 143, asparagine 219, threonine 234, and arginine 298 each bind IMP. Histidine 40 functions as the Proton donor in the catalytic mechanism. 294–300 (VTTGRRR) lines the substrate pocket. GTP contacts are provided by residues arginine 300, 326–328 (KLD), and 409–411 (GTG).

Belongs to the adenylosuccinate synthetase family. Homodimer. The cofactor is Mg(2+).

The protein resides in the cytoplasm. It catalyses the reaction IMP + L-aspartate + GTP = N(6)-(1,2-dicarboxyethyl)-AMP + GDP + phosphate + 2 H(+). Its pathway is purine metabolism; AMP biosynthesis via de novo pathway; AMP from IMP: step 1/2. Functionally, plays an important role in the de novo pathway and in the salvage pathway of purine nucleotide biosynthesis. Catalyzes the first committed step in the biosynthesis of AMP from IMP. The polypeptide is Adenylosuccinate synthetase (Ajellomyces capsulatus (strain NAm1 / WU24) (Darling's disease fungus)).